The chain runs to 251 residues: uncharacterized protein (251 aa).

It belongs to the PaiB family.

This is an uncharacterized protein from Emericella nidulans (strain FGSC A4 / ATCC 38163 / CBS 112.46 / NRRL 194 / M139) (Aspergillus nidulans).